A 204-amino-acid chain; its full sequence is Leucyl/phenylalanyl-tRNA--protein transferase (204 aa).

The protein belongs to the L/F-transferase family.

The protein resides in the cytoplasm. It catalyses the reaction N-terminal L-lysyl-[protein] + L-leucyl-tRNA(Leu) = N-terminal L-leucyl-L-lysyl-[protein] + tRNA(Leu) + H(+). The catalysed reaction is N-terminal L-arginyl-[protein] + L-leucyl-tRNA(Leu) = N-terminal L-leucyl-L-arginyl-[protein] + tRNA(Leu) + H(+). It carries out the reaction L-phenylalanyl-tRNA(Phe) + an N-terminal L-alpha-aminoacyl-[protein] = an N-terminal L-phenylalanyl-L-alpha-aminoacyl-[protein] + tRNA(Phe). Functionally, functions in the N-end rule pathway of protein degradation where it conjugates Leu, Phe and, less efficiently, Met from aminoacyl-tRNAs to the N-termini of proteins containing an N-terminal arginine or lysine. This is Leucyl/phenylalanyl-tRNA--protein transferase from Sinorhizobium medicae (strain WSM419) (Ensifer medicae).